We begin with the raw amino-acid sequence, 159 residues long: Putative ribosomal RNA large subunit methyltransferase H (159 aa).

Residues Leu76, Gly108, and 127–132 (FSKMTF) each bind S-adenosyl-L-methionine.

This sequence belongs to the RNA methyltransferase RlmH family.

It localises to the cytoplasm. The enzyme catalyses pseudouridine(1915) in 23S rRNA + S-adenosyl-L-methionine = N(3)-methylpseudouridine(1915) in 23S rRNA + S-adenosyl-L-homocysteine + H(+). Its function is as follows. Specifically methylates the pseudouridine at position 1915 (m3Psi1915) in 23S rRNA. This Methanococcus maripaludis (strain C7 / ATCC BAA-1331) protein is Putative ribosomal RNA large subunit methyltransferase H.